Reading from the N-terminus, the 464-residue chain is MAVYNYDVVVLGSGPAGEGAAMNAAKAGRKVAMVDSRRQVGGNCTHLGTIPSKALRHSVRQIMQFNTNPMFRAIGEPRWFSFPDVLKSAEKVISKQVASRTGYYARNRVDVFFGTGSFADEQTVEVVCPNGVVEKLVAKHIIIATGSRPYRPADIDFHHPRVYDSDTILSLSHTPRKLIVYGAGVIGCEYASIFSGLGVLVELVDNRGQLLSFLDSEISQALSYHFSNNNITVRHNEEYERVEGLDNGVVLHLKSGKKIKADALLWCNGRTGNTDRLGLENIGIKVNSRGQIEVDQAYRTSVPNIYGAGDVIGWPSLASAAHDQGRSAAGSIVDNGSWRFVDDVPTGIYTIPEISSIGKNEQELTQAKVPYEVGKAFFKSMARAQIAGEPQGMLKILFHRETLEILGVHCFGYQASEIVHIGQAIMNQPGEQNNLKYFVNTTFNYPTMAEAYRVAAYDGLNRLF.

Position 35 to 44 (35 to 44 (DSRRQVGGNC)) interacts with FAD.

It belongs to the class-I pyridine nucleotide-disulfide oxidoreductase family. It depends on FAD as a cofactor.

It is found in the cytoplasm. The enzyme catalyses NAD(+) + NADPH = NADH + NADP(+). Functionally, conversion of NADPH, generated by peripheral catabolic pathways, to NADH, which can enter the respiratory chain for energy generation. The protein is Soluble pyridine nucleotide transhydrogenase of Pseudomonas entomophila (strain L48).